The chain runs to 90 residues: Defensin-like protein 193 (90 aa).

Residues M1–A27 form the signal peptide. 4 disulfide bridges follow: C32–C86, C45–C69, C54–C81, and C58–C83.

Belongs to the DEFL family. Protease inhibitor I18 (RTI/MTI-2) subfamily.

The protein localises to the secreted. The protein is Defensin-like protein 193 (ATTI2) of Arabidopsis thaliana (Mouse-ear cress).